Reading from the N-terminus, the 152-residue chain is Large ribosomal subunit protein bL9 (152 aa).

Belongs to the bacterial ribosomal protein bL9 family.

Binds to the 23S rRNA. The protein is Large ribosomal subunit protein bL9 of Mycobacterium leprae (strain Br4923).